The primary structure comprises 164 residues: FMN reductase (NADH) RutF (164 aa).

The protein belongs to the non-flavoprotein flavin reductase family. RutF subfamily.

It carries out the reaction FMNH2 + NAD(+) = FMN + NADH + 2 H(+). Functionally, catalyzes the reduction of FMN to FMNH2 which is used to reduce pyrimidine by RutA via the Rut pathway. This chain is FMN reductase (NADH) RutF, found in Escherichia coli O45:K1 (strain S88 / ExPEC).